A 97-amino-acid chain; its full sequence is Apolipoprotein C-II (97 aa).

The signal sequence occupies residues 1–22; the sequence is MGSRFFLALFLALLVLGNEVQG. The segment at 63-71 is lipid binding; the sequence is SVDEKLRDM. Residues 75–97 form a lipoprotein lipase cofactor region; it reads SSAAMTTYAGIFTDQLLTLLKGE.

The protein belongs to the apolipoprotein C2 family. Proapolipoprotein C-II is synthesized as a sialic acid containing glycoprotein which is subsequently desialylated prior to its proteolytic processing. Post-translationally, proapolipoprotein C-II, the major form found in plasma undergoes proteolytic cleavage of its N-terminal hexapeptide to generate the mature form apolipoprotein C-II, which occurs as the minor form in plasma.

The protein resides in the secreted. Component of chylomicrons, very low-density lipoproteins (VLDL), low-density lipoproteins (LDL), and high-density lipoproteins (HDL) in plasma. Plays an important role in lipoprotein metabolism as an activator of lipoprotein lipase. The sequence is that of Apolipoprotein C-II (Apoc2) from Rattus norvegicus (Rat).